A 175-amino-acid polypeptide reads, in one-letter code: Bifunctional protein PyrR (175 aa).

Residues 97-109 carry the PRPP-binding motif; that stretch reads IVLIDDVLFTGRT.

It belongs to the purine/pyrimidine phosphoribosyltransferase family. PyrR subfamily. As to quaternary structure, homodimer and homohexamer; in equilibrium.

It carries out the reaction UMP + diphosphate = 5-phospho-alpha-D-ribose 1-diphosphate + uracil. Functionally, regulates transcriptional attenuation of the pyrimidine nucleotide (pyr) operon by binding in a uridine-dependent manner to specific sites on pyr mRNA. This disrupts an antiterminator hairpin in the RNA and favors formation of a downstream transcription terminator, leading to a reduced expression of downstream genes. In terms of biological role, also displays a weak uracil phosphoribosyltransferase activity which is not physiologically significant. In Leuconostoc mesenteroides subsp. mesenteroides (strain ATCC 8293 / DSM 20343 / BCRC 11652 / CCM 1803 / JCM 6124 / NCDO 523 / NBRC 100496 / NCIMB 8023 / NCTC 12954 / NRRL B-1118 / 37Y), this protein is Bifunctional protein PyrR.